The sequence spans 71 residues: Small ribosomal subunit protein bS21 (71 aa).

The protein belongs to the bacterial ribosomal protein bS21 family.

In Wigglesworthia glossinidia brevipalpis, this protein is Small ribosomal subunit protein bS21.